We begin with the raw amino-acid sequence, 894 residues long: Alanine--tRNA ligase (894 aa).

The Zn(2+) site is built by His-569, His-573, Cys-683, and His-687.

The protein belongs to the class-II aminoacyl-tRNA synthetase family. Zn(2+) serves as cofactor.

Its subcellular location is the cytoplasm. The enzyme catalyses tRNA(Ala) + L-alanine + ATP = L-alanyl-tRNA(Ala) + AMP + diphosphate. In terms of biological role, catalyzes the attachment of alanine to tRNA(Ala) in a two-step reaction: alanine is first activated by ATP to form Ala-AMP and then transferred to the acceptor end of tRNA(Ala). Also edits incorrectly charged Ser-tRNA(Ala) and Gly-tRNA(Ala) via its editing domain. This is Alanine--tRNA ligase from Chloroflexus aurantiacus (strain ATCC 29366 / DSM 635 / J-10-fl).